We begin with the raw amino-acid sequence, 291 residues long: ADP-dependent (S)-NAD(P)H-hydrate dehydratase (291 aa).

The 269-residue stretch at 5-273 (SKDILEEVIT…QALPTYMKKY (269 aa)) folds into the YjeF C-terminal domain. Residues alanine 40, glycine 103, and histidine 153 each contribute to the (6S)-NADPHX site. Residue glycine 215 participates in AMP binding. Aspartate 216 is a binding site for (6S)-NADPHX.

Belongs to the NnrD/CARKD family. In terms of assembly, homotetramer. Mg(2+) is required as a cofactor.

It carries out the reaction (6S)-NADHX + ADP = AMP + phosphate + NADH + H(+). The catalysed reaction is (6S)-NADPHX + ADP = AMP + phosphate + NADPH + H(+). Its function is as follows. Catalyzes the dehydration of the S-form of NAD(P)HX at the expense of ADP, which is converted to AMP. Together with NAD(P)HX epimerase, which catalyzes the epimerization of the S- and R-forms, the enzyme allows the repair of both epimers of NAD(P)HX, a damaged form of NAD(P)H that is a result of enzymatic or heat-dependent hydration. This is ADP-dependent (S)-NAD(P)H-hydrate dehydratase from Enterococcus faecalis (strain ATCC 700802 / V583).